Reading from the N-terminus, the 1031-residue chain is Semaphorin-6A (1031 aa).

An N-terminal signal peptide occupies residues 1–18; it reads MRPAALLLCLTLLHCAGA. Over 19–649 the chain is Extracellular; sequence GFPEDSEPIS…KSNDQLVPVT (631 aa). In terms of domain architecture, Sema spans 24–512; sequence SEPISISHGN…FSTCVIKVPL (489 aa). 3 N-linked (GlcNAc...) asparagine glycosylation sites follow: Asn33, Asn49, and Asn65. 4 cysteine pairs are disulfide-bonded: Cys107/Cys117, Cys135/Cys144, Cys258/Cys369, and Cys283/Cys328. An N-linked (GlcNAc...) asparagine glycan is attached at Asn282. N-linked (GlcNAc...) asparagine glycans are attached at residues Asn434 and Asn461. Disulfide bonds link Cys477–Cys506, Cys515–Cys533, Cys521–Cys568, and Cys525–Cys542. The helical transmembrane segment at 650 to 670 threads the bilayer; the sequence is LLAIAVILAFVMGAVFSGIIV. Residues 671 to 1031 lie on the Cytoplasmic side of the membrane; it reads YCVCDHRRKD…TSMKPNDACT (361 aa). Residue Ser698 is modified to Phosphoserine. Disordered regions lie at residues 754–777, 861–902, and 914–1031; these read ALPT…SREW, SSKS…TGLS, and GLEY…DACT. A compositionally biased stretch (polar residues) spans 921 to 931; sequence YPTNSLTRSHQ. Positions 932 to 951 are enriched in low complexity; sequence TTTLKRNNTNSSNSSHLSRN. Ser953 carries the post-translational modification Phosphoserine. Composition is skewed to polar residues over residues 971 to 998 and 1019 to 1031; these read QVHS…SLTR and PLST…DACT.

It belongs to the semaphorin family. As to quaternary structure, active as a homodimer or oligomer. The SEMA6A homodimer interacts with a PLXNA2 homodimer, giving rise to a heterotetramer. Interacts with EVL. Particularly high levels in spinal cord, cerebellum, metencephalon, superior and inferior colliculus, diencephalon, olfactory bulb and eye.

Its subcellular location is the cell membrane. Functionally, cell surface receptor for PLXNA2 that plays an important role in cell-cell signaling. Required for normal granule cell migration in the developing cerebellum. Promotes reorganization of the actin cytoskeleton and plays an important role in axon guidance in the developing central nervous system. Can act as repulsive axon guidance cue. Has repulsive action towards migrating granular neurons. May play a role in channeling sympathetic axons into the sympathetic chains and controlling the temporal sequence of sympathetic target innervation. This is Semaphorin-6A (Sema6a) from Mus musculus (Mouse).